The chain runs to 139 residues: HTH-type transcriptional repressor Mb2911 (139 aa).

The HTH marR-type domain maps to 6 to 138; the sequence is DAPLGYLLYR…FKRMLEKLGS (133 aa).

In terms of assembly, homodimer.

Functionally, represses expression of the HQNO methyltransferase htm gene by binding to its promoter region. The protein is HTH-type transcriptional repressor Mb2911 of Mycobacterium bovis (strain ATCC BAA-935 / AF2122/97).